Reading from the N-terminus, the 736-residue chain is 1,4-alpha-glucan branching enzyme GlgB (736 aa).

D415 functions as the Nucleophile in the catalytic mechanism. The active-site Proton donor is E470.

This sequence belongs to the glycosyl hydrolase 13 family. GlgB subfamily. In terms of assembly, monomer.

It carries out the reaction Transfers a segment of a (1-&gt;4)-alpha-D-glucan chain to a primary hydroxy group in a similar glucan chain.. It participates in glycan biosynthesis; glycogen biosynthesis. In terms of biological role, catalyzes the formation of the alpha-1,6-glucosidic linkages in glycogen by scission of a 1,4-alpha-linked oligosaccharide from growing alpha-1,4-glucan chains and the subsequent attachment of the oligosaccharide to the alpha-1,6 position. The polypeptide is 1,4-alpha-glucan branching enzyme GlgB (Paraburkholderia xenovorans (strain LB400)).